A 229-amino-acid polypeptide reads, in one-letter code: Ras-related protein RABA6b (229 aa).

20–27 (GDSAVGKS) contacts GTP. The Effector region signature appears at 42 to 50 (SKPTIGVDF). GTP contacts are provided by residues 68–72 (DTAGQ), 126–129 (NKSD), and 156–157 (SA). 2 S-geranylgeranyl cysteine lipidation sites follow: C226 and C227.

The protein belongs to the small GTPase superfamily. Rab family.

The protein resides in the cell membrane. Its function is as follows. Intracellular vesicle trafficking and protein transport. The protein is Ras-related protein RABA6b (RABA6B) of Arabidopsis thaliana (Mouse-ear cress).